The chain runs to 318 residues: MGLVCFPDTQDKIPSIPVHLTRVGVTGVKKLLKIEREGRRPIILLPTFDAFVDLPSKQRGIHMSRNPEAISDVLEEVVENNALELESLCAEIVNELLKKHRYARRAEVSMNSDFMFMKRSPVTRRKSQEMTKIMADAIGYRDDDGIVIRKMIGAEVVGMTVCPCAQESVREASRQKLLEFLDDETVERVLDCVSFASHNQSGRGMIMIEVPEDQTIRAEKLIDIIESSMSSPVYELLKRPDENAVVMSAHENPMFVEDCVRNMVHRIVSEYPHLPDDTIVTVRQINEESIHRHNAFAEKVATMGELRYEIEELNGAGS.

Belongs to the GTP cyclohydrolase IV family. As to quaternary structure, homodimer. It depends on Fe(2+) as a cofactor.

It carries out the reaction GTP + H2O = 7,8-dihydroneopterin 2',3'-cyclic phosphate + formate + diphosphate + H(+). It functions in the pathway cofactor biosynthesis; 5,6,7,8-tetrahydromethanopterin biosynthesis. Its function is as follows. Converts GTP to 7,8-dihydro-D-neopterin 2',3'-cyclic phosphate, the first intermediate in the biosynthesis of coenzyme methanopterin. This chain is GTP cyclohydrolase MptA, found in Methanothermobacter thermautotrophicus (strain ATCC 29096 / DSM 1053 / JCM 10044 / NBRC 100330 / Delta H) (Methanobacterium thermoautotrophicum).